We begin with the raw amino-acid sequence, 272 residues long: Shikimate dehydrogenase (NADP(+)) (272 aa).

Residues 14-16 and Thr-61 contribute to the shikimate site; that span reads SKS. Catalysis depends on Lys-65, which acts as the Proton acceptor. Glu-77 contacts NADP(+). Positions 86 and 102 each coordinate shikimate. NADP(+) is bound by residues 126–130, 149–154, and Met-213; these read GAGGA and NRTASR. Tyr-215 contacts shikimate. Gly-237 serves as a coordination point for NADP(+).

It belongs to the shikimate dehydrogenase family. As to quaternary structure, homodimer.

The catalysed reaction is shikimate + NADP(+) = 3-dehydroshikimate + NADPH + H(+). It participates in metabolic intermediate biosynthesis; chorismate biosynthesis; chorismate from D-erythrose 4-phosphate and phosphoenolpyruvate: step 4/7. In terms of biological role, involved in the biosynthesis of the chorismate, which leads to the biosynthesis of aromatic amino acids. Catalyzes the reversible NADPH linked reduction of 3-dehydroshikimate (DHSA) to yield shikimate (SA). In Salmonella heidelberg (strain SL476), this protein is Shikimate dehydrogenase (NADP(+)).